Here is a 226-residue protein sequence, read N- to C-terminus: Orotate phosphoribosyltransferase (226 aa).

Residues Arg-107, Lys-108, Lys-111, and 133–141 (EDLTTDGGS) contribute to the 5-phospho-alpha-D-ribose 1-diphosphate site. Thr-137 contributes to the orotate binding site.

The protein belongs to the purine/pyrimidine phosphoribosyltransferase family. PyrE subfamily. In terms of assembly, homodimer. Mg(2+) is required as a cofactor.

The catalysed reaction is orotidine 5'-phosphate + diphosphate = orotate + 5-phospho-alpha-D-ribose 1-diphosphate. It functions in the pathway pyrimidine metabolism; UMP biosynthesis via de novo pathway; UMP from orotate: step 1/2. Its function is as follows. Catalyzes the transfer of a ribosyl phosphate group from 5-phosphoribose 1-diphosphate to orotate, leading to the formation of orotidine monophosphate (OMP). In Dinoroseobacter shibae (strain DSM 16493 / NCIMB 14021 / DFL 12), this protein is Orotate phosphoribosyltransferase.